Here is a 193-residue protein sequence, read N- to C-terminus: Epididymal-specific lipocalin-12 (193 aa).

The signal sequence occupies residues 1 to 19 (MGPWWALWLILTLPQILES). A disulfide bond links Cys88 and Cys193. N-linked (GlcNAc...) asparagine glycans are attached at residues Asn143 and Asn172.

It belongs to the calycin superfamily. Lipocalin family. As to quaternary structure, monomer. As to expression, expressed in epididymis.

It is found in the secreted. Binds all-trans retinoic acid and may act as a retinoid carrier protein within the epididymis. May play a role in male fertility. The sequence is that of Epididymal-specific lipocalin-12 (Lcn12) from Mus musculus (Mouse).